A 198-amino-acid chain; its full sequence is Holliday junction branch migration complex subunit RuvA (198 aa).

A domain I region spans residues 1-63 (MYDYIKGQLT…EDAHLLFGFH (63 aa)). A domain II region spans residues 64–142 (TKDEKDVFLK…EAPQETGNTK (79 aa)). Residues 143-147 (ARSNK) are flexible linker. The interval 148-198 (AGNTQLDEAIEALLALGYKATELKKIRAFFEGTSETAEQYIKSALKLLMKG) is domain III.

The protein belongs to the RuvA family. As to quaternary structure, homotetramer. Forms an RuvA(8)-RuvB(12)-Holliday junction (HJ) complex. HJ DNA is sandwiched between 2 RuvA tetramers; dsDNA enters through RuvA and exits via RuvB. An RuvB hexamer assembles on each DNA strand where it exits the tetramer. Each RuvB hexamer is contacted by two RuvA subunits (via domain III) on 2 adjacent RuvB subunits; this complex drives branch migration. In the full resolvosome a probable DNA-RuvA(4)-RuvB(12)-RuvC(2) complex forms which resolves the HJ.

The protein localises to the cytoplasm. The RuvA-RuvB-RuvC complex processes Holliday junction (HJ) DNA during genetic recombination and DNA repair, while the RuvA-RuvB complex plays an important role in the rescue of blocked DNA replication forks via replication fork reversal (RFR). RuvA specifically binds to HJ cruciform DNA, conferring on it an open structure. The RuvB hexamer acts as an ATP-dependent pump, pulling dsDNA into and through the RuvAB complex. HJ branch migration allows RuvC to scan DNA until it finds its consensus sequence, where it cleaves and resolves the cruciform DNA. The polypeptide is Holliday junction branch migration complex subunit RuvA (Streptococcus pyogenes serotype M18 (strain MGAS8232)).